The sequence spans 341 residues: Protein BIG GRAIN 1-like C (341 aa).

2 disordered regions span residues 28-61 (DGLQ…LTTL) and 76-138 (SSTT…SDDD). A compositionally biased stretch (basic and acidic residues) spans 52–61 (NKKDDKLTTL). Low complexity predominate over residues 76-92 (SSTTTTNSSDSSSFSSS). Residues 105 to 138 (KLAEQGKRSGDERQRTKRTVMDNDSRLFSKSDDD) show a composition bias toward basic and acidic residues.

The protein belongs to the BIG GRAIN 1 (BG1) plant protein family.

The protein resides in the cell membrane. Involved in auxin transport. Regulator of the auxin signaling pathway. In Arabidopsis thaliana (Mouse-ear cress), this protein is Protein BIG GRAIN 1-like C.